Here is a 494-residue protein sequence, read N- to C-terminus: MPAEPIWPFDNSYARLPERFFARVRPTPVAQPGLVRLNEPLAEALGLEVAALRGKAGLAMFAGNRLPEGAEPIALAYAGHQFGQWVPQLGDGRAVLLGEVVDRDGRRRDIQLKGSGITPFSRGGDGRAPIGPVVREYLASEAMHALGIPTTRSLAAVTTGEPVLRERVEPGGILTRVAHSHVRVGTFEYFHWREDVDALRTLADYVIARHYPELADDARPHLALLKAVIDRTAELVAHWISVGFIHGVMNTDNTSLVGETLDYGPFGFLDAYHPRTCYSAIDIENRYAFDQQPRIAHWNLTRLAETLLPLLHEDEDEAVARAGEALNGFLPRFEACHHARLRAKLGLAESRRGDIDLAHELLDLMARQQADFTQVFRALSDERMDDPDEGPARRCFARPEALDGWRARWIQRLRQEGRPEPARQAAMRAVNPKFILRNHLAQWAVDAATERGDFGPMDRLLQVLTRPYDPQPEAEALAAPPRPEQQVYQTFCGT.

Positions 90, 92, 93, 113, 125, 126, 176, and 183 each coordinate ATP. The active-site Proton acceptor is the Asp252. The Mg(2+) site is built by Asn253 and Asp262. Residue Asp262 coordinates ATP.

The protein belongs to the SELO family. Mg(2+) serves as cofactor. Requires Mn(2+) as cofactor.

The catalysed reaction is L-seryl-[protein] + ATP = 3-O-(5'-adenylyl)-L-seryl-[protein] + diphosphate. It carries out the reaction L-threonyl-[protein] + ATP = 3-O-(5'-adenylyl)-L-threonyl-[protein] + diphosphate. It catalyses the reaction L-tyrosyl-[protein] + ATP = O-(5'-adenylyl)-L-tyrosyl-[protein] + diphosphate. The enzyme catalyses L-histidyl-[protein] + UTP = N(tele)-(5'-uridylyl)-L-histidyl-[protein] + diphosphate. The catalysed reaction is L-seryl-[protein] + UTP = O-(5'-uridylyl)-L-seryl-[protein] + diphosphate. It carries out the reaction L-tyrosyl-[protein] + UTP = O-(5'-uridylyl)-L-tyrosyl-[protein] + diphosphate. Nucleotidyltransferase involved in the post-translational modification of proteins. It can catalyze the addition of adenosine monophosphate (AMP) or uridine monophosphate (UMP) to a protein, resulting in modifications known as AMPylation and UMPylation. The sequence is that of Protein nucleotidyltransferase YdiU from Alkalilimnicola ehrlichii (strain ATCC BAA-1101 / DSM 17681 / MLHE-1).